A 282-amino-acid polypeptide reads, in one-letter code: Bifunctional protein FolD (282 aa).

NADP(+)-binding positions include 165–167 (GRS), serine 190, and threonine 231.

It belongs to the tetrahydrofolate dehydrogenase/cyclohydrolase family. In terms of assembly, homodimer.

The catalysed reaction is (6R)-5,10-methylene-5,6,7,8-tetrahydrofolate + NADP(+) = (6R)-5,10-methenyltetrahydrofolate + NADPH. It carries out the reaction (6R)-5,10-methenyltetrahydrofolate + H2O = (6R)-10-formyltetrahydrofolate + H(+). It functions in the pathway one-carbon metabolism; tetrahydrofolate interconversion. Functionally, catalyzes the oxidation of 5,10-methylenetetrahydrofolate to 5,10-methenyltetrahydrofolate and then the hydrolysis of 5,10-methenyltetrahydrofolate to 10-formyltetrahydrofolate. This Clostridium botulinum (strain Alaska E43 / Type E3) protein is Bifunctional protein FolD.